The sequence spans 166 residues: Crossover junction endodeoxyribonuclease RuvC (166 aa).

Residues D7, E67, and D139 contribute to the active site. Mg(2+) is bound by residues D7, E67, and D139.

The protein belongs to the RuvC family. As to quaternary structure, homodimer which binds Holliday junction (HJ) DNA. The HJ becomes 2-fold symmetrical on binding to RuvC with unstacked arms; it has a different conformation from HJ DNA in complex with RuvA. In the full resolvosome a probable DNA-RuvA(4)-RuvB(12)-RuvC(2) complex forms which resolves the HJ. Mg(2+) serves as cofactor.

It is found in the cytoplasm. It carries out the reaction Endonucleolytic cleavage at a junction such as a reciprocal single-stranded crossover between two homologous DNA duplexes (Holliday junction).. Functionally, the RuvA-RuvB-RuvC complex processes Holliday junction (HJ) DNA during genetic recombination and DNA repair. Endonuclease that resolves HJ intermediates. Cleaves cruciform DNA by making single-stranded nicks across the HJ at symmetrical positions within the homologous arms, yielding a 5'-phosphate and a 3'-hydroxyl group; requires a central core of homology in the junction. The consensus cleavage sequence is 5'-(A/T)TT(C/G)-3'. Cleavage occurs on the 3'-side of the TT dinucleotide at the point of strand exchange. HJ branch migration catalyzed by RuvA-RuvB allows RuvC to scan DNA until it finds its consensus sequence, where it cleaves and resolves the cruciform DNA. This chain is Crossover junction endodeoxyribonuclease RuvC, found in Paramagnetospirillum magneticum (strain ATCC 700264 / AMB-1) (Magnetospirillum magneticum).